The chain runs to 711 residues: Early transcription factor 82 kDa subunit (711 aa).

The protein belongs to the poxviridae VETF large subunit family. Heterodimer of a 70 kDa and a 82 kDa subunit. Part of the early transcription complex composed of ETF, RAP94, and the DNA-directed RNA polymerase.

The protein localises to the virion. Its function is as follows. Acts with RNA polymerase to initiate transcription from early gene promoters. Is recruited by the RPO-associated protein of 94 kDa (RAP94) to form the early transcription complex, which also contains the core RNA polymerase. ETF heterodimer binds to early gene promoters. The polypeptide is Early transcription factor 82 kDa subunit (VETFL) (Oryctolagus cuniculus (Rabbit)).